Consider the following 692-residue polypeptide: MTDGNLSTSTNGVALMGILDSRPGNHIQNLQHLTLKAPRSLSLPEYGPKLKLSALEDRHSLQSVDSGIPTLEIGNPEPVPCSVVHVRRKPSESEIVPERACQSACLLPSYAPPAPAGAEREQSVRKSSTFPRTGYDSVKLYSPASQTLQRSDNVSVCSVSSLSTELSTTLSVSNEDILDLVVTSSSSAIVTLENDDDPQFTDVTLSSTRETRDLQRDCAGETEEGRKLRLLGPFSHFFTRNSLARKQNARLDKQSDLGWKLFGKVPLGENAQKDAKKLQKEYEDKAGRPSKPPSPKQNVRKNLDFEPLSTTALILEDRPANLPAKPAEEAQKHRQQYEEMVVQAKKRELKEAQRRKKQLEERCRLEESIGNAVLTWNNEILPNWETMWCSRKVRDLWWQGIPPSVRGKVWSLAIGNELNITHELFDICLARAKERWRSFSTGGSEAETEDAGFSAADREASLELIKLDISRTFPSLCIFQQGGPYHDMLHSVLGAYTCYRPDVGYVQGMSFIAAVLILNLDTADAFIAFSNLLNKPCQMAFFRVDHGLMLTYFAAFEVFFEENLPKLFAHFKKNNLTPDIYLIDWIFTLYSKSLPLDLACRVWDVFCRDGEEFLFRTALGLLRLFQDVLTRMDFIHVAQFLTRLPEDLPAEEFFASIASIQMQSRNKKWAQVLTALQKDSREMEKGSPSLRH.

At serine 91 the chain carries Phosphoserine. Disordered regions lie at residues 270-303 (NAQKDAKKLQKEYEDKAGRPSKPPSPKQNVRKNL) and 315-335 (LEDRPANLPAKPAEEAQKHRQ). A compositionally biased stretch (basic and acidic residues) spans 271 to 287 (AQKDAKKLQKEYEDKAG). Phosphoserine is present on serine 294. The span at 326-335 (PAEEAQKHRQ) shows a compositional bias: basic and acidic residues. Residues 400 to 610 (GIPPSVRGKV…RVWDVFCRDG (211 aa)) enclose the Rab-GAP TBC domain.

Interacts with ULK1. May interact with RAB11A and RAB11B, but does not exhibit any GTPase-activating activity toward these proteins. Interacts with TRAPPC8.

It is found in the golgi apparatus. The protein resides in the cis-Golgi network. Its subcellular location is the trans-Golgi network. Its function is as follows. Plays a role in the regulation of starvation-induced autophagosome formation. Together with the TRAPPIII complex, regulates a constitutive trafficking step from peripheral recycling endosomes to the early Golgi, maintaining the cycling pool of ATG9 required for initiation of autophagy. The polypeptide is TBC1 domain family member 14 (TBC1D14) (Bos taurus (Bovine)).